We begin with the raw amino-acid sequence, 710 residues long: Homeobox-leucine zipper protein ROC8 (710 aa).

The interval 1–23 (MDFGDEPEGSDSQRRRKRYHRHT) is disordered. A compositionally biased stretch (basic residues) spans 14–23 (RRRKRYHRHT). Residues 15–74 (RRKRYHRHTPRQIQQLEAMFKECPHPDENQRAQLSRELGLEPRQIKFWFQNRRTQMKAQH) constitute a DNA-binding region (homeobox). Positions 82–144 (LRAENDKIRC…DRVSNLTSKY (63 aa)) form a coiled coil. The region spanning 197–440 (SDMERPMMAE…LQRACERYAS (244 aa)) is the START domain. Low complexity predominate over residues 630 to 648 (RPGSAAGASTSSAGPLAAA). The disordered stretch occupies residues 630–650 (RPGSAAGASTSSAGPLAAARG).

The protein belongs to the HD-ZIP homeobox family. Class IV subfamily.

The protein resides in the nucleus. Probable transcription factor. The protein is Homeobox-leucine zipper protein ROC8 (ROC8) of Oryza sativa subsp. japonica (Rice).